The primary structure comprises 2344 residues: MNDSNSSNDSCNTENNTLTATKNSINNTTTTTTTPNNNVNCLKTSGSIKLSASSVPFIPGSSASLPSILSNQYKLAASNNVSNNIMMISTPIISSAQQQQQQVPPPQQTTTTTTATATAITPTPITTSQSTSSSMLNLPLKVGKESIETLFRNRFHPKNNIRETVLSSLQSILIPDLSDTINNTKENIEYFYNMIIDENNYILKLLLLNIINDTKRNLVVYNYNQQHQLPIQNTSSPNTPSSTTTTTTTSTKPSKRGDKERERGRRNKDKINEKQLQQQQLQQLQLQQQLDHEGSSLYLPFSSLLSFIKPDKQQQPQQSQQSQLNEIDQMVRPKSLPKDDNDSDNFNIRVLEYNLKLLIKIYFKVSMYQDSIKTHIFDLYIQINQAISEQQRQLQEKEKESKTSKPIPQPIISLVIPTVLVSIGDIIKYKYATPSPPNLTPTTTTKMEEEERIINTILINEFKKTDVSIIESNLYLFECILSISVSNEPTIVVPNTTTATTATTATTSNTSTAAAATTTTPTLSTSSSSLSPPASTQSSLSLSSSSSAVIAPTTVGYIFKFNKELFRKLIALVYSTVVQHQITLSTVFTTLVLKGYLNEDQIQKLLNITLFKLSDPSEQVKLSYLTLLSKMVSYFDLNHQKNLNHKVNDISLPYKLLIMGSTSQPFFNGQIFKKIFDWIMGIGKDQPSFDSLTKYLIDLFDSFNVISILFNEQNKILSQQYLAAQSTMITPPLSLHQIDDRRKFETLISKSDELIWFWTVWECSKFCIANRLKSPYGSAFQTFEIFEKLLLQLNKDRRDFKKIKILLHFMESMEKLIFSTVNGSVLVQSLNNKETQFFRHNVRVCEDWFSRIRVNLLKASILSSSTPDIIRHASLRVQDIQANRFVLDSNTAHFELEFCILHLANALQQLNETESLQGLSNWSDINLNNSDNNNNNNNKNNNNNNNSTFFNNGNINKYTLKLPWMKGVILRSKQKFEESISSLLSVPPMLESNSISFPFVLEQIIKSYLDISNFTEVEQFLQNYQNQIQQQSNSLIIYKDTFIKTLGSFYRGEMEEAHAFAKRTESQNHILQREQLGLGLLGNQIMTDELLLSIMVNQKDLFNNTNIINNNNSGGSSSGTATATAVTTTTTTTTTTTTTTTTTTNTNNDIIGFSNNINSMLKLTKNNILKALNYLGLESNVQTFQYLTQLKIMDEIENGVYNSRVVPINNQIGFLERLRRVRGHISNTKQRSDILLSNIPLTEKMIKLSRKFENYKFSSKLLDTILESHSSSYYLERCKLKYLNGKQTEATLDLIKYAHRDITIPSSSTTTTTTTTTTTPPSTSSNTATTTNNINIDELSTQKFKVYTEIIKYLNSNPSIITELSSSNYSIPQEQLNPEYYFKKATLTKPENSKLWITYADWILNEKSNISEQNDEESLNGGGSGGNENSSNEMLRLKNTNTNELKTAVEAYFQFLKYSMLDGNSNGGLNIRATLKILNILVCSGNKLVETFERCLNELTSTRPFTIIIPQLFARLSHPDTFVQKYVVEILNRIGRDNPNKIVYQTIVGSLNFTNTNNNNNSSCAAATTDDGLDIELLQKQYPNYLQILNIKENLLKHSELLVKETETLIYQLGKLTTLWDDNWQYFIEQIQGWVYINTKQWNDDYQQLKATIKNPTILKHTLKKKNQELLQPIYEKLKRLTAATVLSVCKTPHEKWFTKCHFETINKTIRAFEKQNKPTSPFDVLHDLIAEFQQYRLISLSLSSVNPSLALFRPTITQMPGTDLNYFNINHIHHHHHHHNHHGNNNNQHSTSSGNLPIQNQVTIQLIKPTIYLLPTKTKPKKMAMLGSDGNLYYYLLKGREDLHLDERIMQLLNVVDQLLMNDKKPTLKLLRTRNYSVIPLSQSSGLIQWVEGAVPLFSIYKNWYKNDQVYKQQQQQQQQLQQQQQQQQQQQQQQPQPQQQPQQQPQQQPQQQPQPQQNSTTTSNIVNKPIIARPVDIFYAKITPLLEKAGLNFMTPRSEWPKEILIQVLNELMQETPKWILQRELWFSSSSSSELFLKTQSYSRSLALMSVIGYMIGLGDRHLDNILLDLKTGEIVHIDYNICFEKGAELKIPERVPFRMTQIFEYALGLTGVQGTFRETSIQIMHLLRKNKDILLNLLETFIYDPLFDWKHSNKQTNNNNNNNNNNNMNQAAGEQESIEKKQSSNNSSNPIISTPTKLQQQQKLPNSPLSISSNNTNSTNNNNNNNNNNNNNNNNNNNNNNKDQDSDSSQSQEDEDNNVVEGEGGEGGEGDIDELNLVQDSSNGKDAFKSIQGLTVVNQVRLKLEGTEKKLSIPDQIDLIIRESMNVENLSSTYEGWSPWV.

Disordered stretches follow at residues 1–38 and 230–285; these read MNDS…PNNN and PIQN…QQLQ. A compositionally biased stretch (low complexity) spans 233-252; that stretch reads NTSSPNTPSSTTTTTTTSTK. Residues 255–273 are compositionally biased toward basic and acidic residues; the sequence is KRGDKERERGRRNKDKINE. Coiled coils occupy residues 264–293 and 378–405; these read GRRN…LDHE and DLYI…KTSK. A compositionally biased stretch (low complexity) spans 275-285; sequence QLQQQQLQQLQ. Disordered stretches follow at residues 508–532, 927–948, 1112–1145, 1306–1330, 1412–1433, and 1776–1796; these read SNTS…SLSP, LNNS…NNST, NSGG…TTTN, SSST…TATT, EQND…SSNE, and HHHH…SSGN. Positions 1136-1552 constitute an FAT domain; it reads TTTTTTTTTN…VYQTIVGSLN (417 aa). The PI3K/PI4K catalytic domain occupies 1808-2192; it reads IKPTIYLLPT…KKQSSNNSSN (385 aa). The G-loop stretch occupies residues 1814–1820; it reads LLPTKTK. The span at 1933 to 1959 shows a compositional bias: low complexity; sequence QQQQPQPQQQPQQQPQQQPQQQPQPQQ. Positions 1933–1967 are disordered; the sequence is QQQQPQPQQQPQQQPQQQPQQQPQPQQNSTTTSNI. Residues 2059–2067 form a catalytic loop region; it reads GLGDRHLDN. The segment at 2079–2103 is activation loop; sequence HIDYNICFEKGAELKIPERVPFRMT. The interval 2157–2279 is disordered; sequence KQTNNNNNNN…GGEGDIDELN (123 aa). Low complexity-rich tracts occupy residues 2160-2172 and 2186-2199; these read NNNN…NNMN and SSNN…STPT. Residues 2200–2214 show a composition bias toward polar residues; sequence KLQQQQKLPNSPLSI. Positions 2215–2254 are enriched in low complexity; sequence SSNNTNSTNNNNNNNNNNNNNNNNNNNNNNKDQDSDSSQS. The segment covering 2255–2277 has biased composition (acidic residues); sequence QEDEDNNVVEGEGGEGGEGDIDE. The region spanning 2312–2344 is the FATC domain; the sequence is KKLSIPDQIDLIIRESMNVENLSSTYEGWSPWV.

Belongs to the PI3/PI4-kinase family.

The enzyme catalyses L-seryl-[protein] + ATP = O-phospho-L-seryl-[protein] + ADP + H(+). It carries out the reaction L-threonyl-[protein] + ATP = O-phospho-L-threonyl-[protein] + ADP + H(+). Functionally, serine/threonine protein kinase involved in mRNA surveillance. Recognizes the substrate consensus sequence [ST]-Q. Involved in nonsense-mediated decay (NMD) of mRNAs containing premature stop codons by phosphorylating upf1. The protein is Probable serine/threonine-protein kinase smg1 (smg1) of Dictyostelium discoideum (Social amoeba).